A 163-amino-acid polypeptide reads, in one-letter code: Phosphopantetheine adenylyltransferase (163 aa).

Ser11 provides a ligand contact to substrate. ATP-binding positions include 11–12 and His19; that span reads SF. Substrate is bound by residues Lys43, Ala76, and Arg90. Residues 91 to 93, Glu101, and 126 to 132 each bind ATP; these read GLR and WQALSSS.

Belongs to the bacterial CoaD family. Homohexamer. Mg(2+) serves as cofactor.

It is found in the cytoplasm. The enzyme catalyses (R)-4'-phosphopantetheine + ATP + H(+) = 3'-dephospho-CoA + diphosphate. It functions in the pathway cofactor biosynthesis; coenzyme A biosynthesis; CoA from (R)-pantothenate: step 4/5. In terms of biological role, reversibly transfers an adenylyl group from ATP to 4'-phosphopantetheine, yielding dephospho-CoA (dPCoA) and pyrophosphate. In Streptococcus pyogenes serotype M2 (strain MGAS10270), this protein is Phosphopantetheine adenylyltransferase.